The following is a 110-amino-acid chain: Large ribosomal subunit protein uL22 (110 aa).

The protein belongs to the universal ribosomal protein uL22 family. Part of the 50S ribosomal subunit.

This protein binds specifically to 23S rRNA; its binding is stimulated by other ribosomal proteins, e.g. L4, L17, and L20. It is important during the early stages of 50S assembly. It makes multiple contacts with different domains of the 23S rRNA in the assembled 50S subunit and ribosome. Its function is as follows. The globular domain of the protein is located near the polypeptide exit tunnel on the outside of the subunit, while an extended beta-hairpin is found that lines the wall of the exit tunnel in the center of the 70S ribosome. The chain is Large ribosomal subunit protein uL22 from Mycoplasma mobile (strain ATCC 43663 / 163K / NCTC 11711) (Mesomycoplasma mobile).